The following is a 207-amino-acid chain: Succinyl-CoA:3-ketoacid coenzyme A transferase subunit B (207 aa).

Glu-43 is an active-site residue.

This sequence belongs to the 3-oxoacid CoA-transferase subunit B family. Heterodimer of a subunit A and a subunit B.

The catalysed reaction is a 3-oxo acid + succinyl-CoA = a 3-oxoacyl-CoA + succinate. The protein is Succinyl-CoA:3-ketoacid coenzyme A transferase subunit B (scoB) of Helicobacter pylori (strain J99 / ATCC 700824) (Campylobacter pylori J99).